The sequence spans 305 residues: MESIVDKQAVKHFLLQLQDKICQQLEATDGQAQFIEDAWQREPGEKLGGGGRTRVMREGAVFEQGGVNFSHVFGEQMPASATAHRPELAGRRFEAMGVSLVMHPKNPYVPTSHANVRFFIAEKEGEAPIWWFGGGFDLTPFYPFVEDGQHWHQTAKNICAPFGSEIYNEHKAWCDRYFYLPHRNETRGIGGLFFDDLNEWSFEQCFAYMQAVGEGYTQAYVPIVEKRKNTPFTERERQFQLYRRGRYVEFNLVLDRGTLFGLQTGGRTESILMSMPPLARWEYAYQPQAGTPEAKLSEFLVPREW.

Ser99 is a substrate binding site. Positions 103 and 113 each coordinate a divalent metal cation. Residue His113 is the Proton donor of the active site. 115-117 (NVR) contributes to the substrate binding site. His152 and His182 together coordinate a divalent metal cation. The important for dimerization stretch occupies residues 247 to 282 (YVEFNLVLDRGTLFGLQTGGRTESILMSMPPLARWE). Residue 265–267 (GGR) coordinates substrate.

The protein belongs to the aerobic coproporphyrinogen-III oxidase family. In terms of assembly, homodimer. It depends on a divalent metal cation as a cofactor.

The protein resides in the cytoplasm. It carries out the reaction coproporphyrinogen III + O2 + 2 H(+) = protoporphyrinogen IX + 2 CO2 + 2 H2O. Its pathway is porphyrin-containing compound metabolism; protoporphyrin-IX biosynthesis; protoporphyrinogen-IX from coproporphyrinogen-III (O2 route): step 1/1. Its function is as follows. Involved in the heme biosynthesis. Catalyzes the aerobic oxidative decarboxylation of propionate groups of rings A and B of coproporphyrinogen-III to yield the vinyl groups in protoporphyrinogen-IX. The protein is Oxygen-dependent coproporphyrinogen-III oxidase of Vibrio cholerae serotype O1 (strain ATCC 39541 / Classical Ogawa 395 / O395).